We begin with the raw amino-acid sequence, 336 residues long: Probable allantoicase 2 (336 aa).

Belongs to the allantoicase family.

The enzyme catalyses allantoate + H2O = (S)-ureidoglycolate + urea. The protein operates within nitrogen metabolism; (S)-allantoin degradation; (S)-ureidoglycolate from allantoate (aminidohydrolase route): step 1/1. This is Probable allantoicase 2 from Burkholderia mallei (strain ATCC 23344).